The following is a 188-amino-acid chain: Holliday junction branch migration complex subunit RuvA (188 aa).

The domain I stretch occupies residues 1–64 (MIAGISGRVL…QDGITLYGFS (64 aa)). A domain II region spans residues 65-143 (NERKKELFLS…SAGIKDMRIY (79 aa)). Tyr-143 is a region of interest (flexible linker). Positions 143 to 188 (YHESLEALISLGYPEKQAREAVKHVYREGMKTSELIKEALKFLSQR) are domain III.

This sequence belongs to the RuvA family. In terms of assembly, homotetramer. Forms an RuvA(8)-RuvB(12)-Holliday junction (HJ) complex. HJ DNA is sandwiched between 2 RuvA tetramers; dsDNA enters through RuvA and exits via RuvB. An RuvB hexamer assembles on each DNA strand where it exits the tetramer. Each RuvB hexamer is contacted by two RuvA subunits (via domain III) on 2 adjacent RuvB subunits; this complex drives branch migration. In the full resolvosome a probable DNA-RuvA(4)-RuvB(12)-RuvC(2) complex forms which resolves the HJ.

The protein resides in the cytoplasm. In terms of biological role, the RuvA-RuvB-RuvC complex processes Holliday junction (HJ) DNA during genetic recombination and DNA repair, while the RuvA-RuvB complex plays an important role in the rescue of blocked DNA replication forks via replication fork reversal (RFR). RuvA specifically binds to HJ cruciform DNA, conferring on it an open structure. The RuvB hexamer acts as an ATP-dependent pump, pulling dsDNA into and through the RuvAB complex. HJ branch migration allows RuvC to scan DNA until it finds its consensus sequence, where it cleaves and resolves the cruciform DNA. This chain is Holliday junction branch migration complex subunit RuvA, found in Thermotoga petrophila (strain ATCC BAA-488 / DSM 13995 / JCM 10881 / RKU-1).